A 282-amino-acid polypeptide reads, in one-letter code: Elongation factor Ts (282 aa).

Residues 80-83 are involved in Mg(2+) ion dislocation from EF-Tu; it reads TDFV.

The protein belongs to the EF-Ts family.

It localises to the cytoplasm. In terms of biological role, associates with the EF-Tu.GDP complex and induces the exchange of GDP to GTP. It remains bound to the aminoacyl-tRNA.EF-Tu.GTP complex up to the GTP hydrolysis stage on the ribosome. This Chlamydia trachomatis serovar D (strain ATCC VR-885 / DSM 19411 / UW-3/Cx) protein is Elongation factor Ts (tsf).